A 122-amino-acid chain; its full sequence is Large ribosomal subunit protein uL18 (122 aa).

Residues 1-21 (MSKLSRKQQTQKRHRRLRRHL) are compositionally biased toward basic residues. The interval 1 to 26 (MSKLSRKQQTQKRHRRLRRHLTGTSD) is disordered.

It belongs to the universal ribosomal protein uL18 family. In terms of assembly, part of the 50S ribosomal subunit; part of the 5S rRNA/L5/L18/L25 subcomplex. Contacts the 5S and 23S rRNAs.

Its function is as follows. This is one of the proteins that bind and probably mediate the attachment of the 5S RNA into the large ribosomal subunit, where it forms part of the central protuberance. In Parasynechococcus marenigrum (strain WH8102), this protein is Large ribosomal subunit protein uL18.